The chain runs to 339 residues: Anthranilate phosphoribosyltransferase (339 aa).

Residues Gly80, Gly83–Asp84, Thr88, Asn90–Thr93, Lys108–Ser116, and Ser120 each bind 5-phospho-alpha-D-ribose 1-diphosphate. Gly80 serves as a coordination point for anthranilate. Mg(2+) is bound at residue Ser92. An anthranilate-binding site is contributed by Asn111. Position 166 (Arg166) interacts with anthranilate. Residues Asp225 and Glu226 each contribute to the Mg(2+) site.

Belongs to the anthranilate phosphoribosyltransferase family. As to quaternary structure, homodimer. The cofactor is Mg(2+).

It catalyses the reaction N-(5-phospho-beta-D-ribosyl)anthranilate + diphosphate = 5-phospho-alpha-D-ribose 1-diphosphate + anthranilate. Its pathway is amino-acid biosynthesis; L-tryptophan biosynthesis; L-tryptophan from chorismate: step 2/5. Catalyzes the transfer of the phosphoribosyl group of 5-phosphorylribose-1-pyrophosphate (PRPP) to anthranilate to yield N-(5'-phosphoribosyl)-anthranilate (PRA). This Desulfosudis oleivorans (strain DSM 6200 / JCM 39069 / Hxd3) (Desulfococcus oleovorans) protein is Anthranilate phosphoribosyltransferase.